An 810-amino-acid polypeptide reads, in one-letter code: Transitional endoplasmic reticulum ATPase homolog 2 (810 aa).

ATP is bound by residues 252–258 (PGTGKTL), asparagine 353, histidine 389, and 526–531 (GCGKTL). Positions 713-727 (RQEKERQDRSARGEE) are enriched in basic and acidic residues. 2 disordered regions span residues 713-732 (RQEK…MEDE) and 777-810 (FGNN…DLYN). Residues 793–802 (PVGGNGGSGG) show a composition bias toward gly residues. The interval 805-810 (DDDLYN) is interaction with ufd-2.

This sequence belongs to the AAA ATPase family. CDC48 subfamily. As to quaternary structure, homohexamer; oligomerization is ATP-independent. Forms a ring-shaped particle of 18.3 nm diameter, that displays 6-fold radial symmetry. Interacts with cdc-48.1 and thus may form heterohexamers. Forms a complex composed of ubxn-3, cdc-48.1 and/or cdc-48.2 and substrate cdt-1. Interacts (via N-terminus) with ubxn-3. Interacts (via N-terminus) with atx-3 (via RRDR motif). Interacts (via N-terminus) with ubxn-5. Interacts with ufd-1. Interacts (via DDDLYN motif) with ufd-2. Interacts (via N-terminus) with ubxn-1. Interacts (via N-terminus) with ubxn-2. Interacts (via N-terminus) with ubxn-4. Interacts with ubxn-6. In terms of tissue distribution, expressed in body wall muscles.

The protein resides in the cytoplasm. It catalyses the reaction ATP + H2O = ADP + phosphate + H(+). With respect to regulation, the first ATP-binding region has low ATPase activity. The second ATP-binding region is responsible for ATPase activity. ATP binding to the first ATP-binding region induces intrinsic activity of the second ATP-binding region. While ATP binding to the first ATP-binding region appears to prevent ATP hydrolysis by the second ATP-binding region, ADP-binding to first region promotes the coordinate and cooperative ATPase cycle of the second ATP-binding region. ATP binding to the first ATP-binding region induces a conformational change, promoting the rotation of the first ATP-binding region relative to the second ATP-binding region in the hexamer. Inhibited by N-ethylmaleimide (NEM). Functionally, ATP-dependent chaperone which probably uses the energy provided by ATP hydrolysis to generate mechanical force to unfold substrate proteins, disassemble protein complexes, and disaggregate protein aggregates. However, able to prevent aggregation of unfolded proteins also in an ATP-independent manner. Targets polyubiquitinated proteins for proteasomal degradation by binding to 'Lys-48'-linked polyubiquitin chains. Involved in the cytoplasmic elimination of misfolded proteins exported from the ER. This pathway, known as ERAD, prevents the activation of the unfolded protein response (UPR) caused by the accumulation of misfolded proteins in the ER. Together with udf-2 and chn-1, regulates myosin assembly in body wall muscles by targeting myosin chaperone unc-45 for proteasomal degradation. During oocyte meiosis and together with cdc-48.1, required for chromosome condensation at the diakinesis phase in prophase I and for progression of metaphase I. During the first embryonic cell division, regulates DNA replication and thus chromosome segregation and decondensation, and nuclear envelope re-assembly. In S phase and in association with ufd-1, npl-4.1 and/or npl-4.2 and ubxn-3, ensures the degradation of DNA licensing factor cdt-1 after the initiation of DNA replication and thus the disassembly of the DNA replication CMG helicase complex by promoting the dissociation from chromatin of several of its components including cdc-45 and sld-5. Regulates ubxn-3 nuclear localization during S phase. During the first embryonic cell divisions and together with cdc-48.1, regulates the re-assembly of the nuclear envelope after mitosis possibly by inactivating kinase air-2, a component of the chromosomal passenger complex (CPC). The chain is Transitional endoplasmic reticulum ATPase homolog 2 (cdc-48.2) from Caenorhabditis elegans.